The primary structure comprises 172 residues: Large ribosomal subunit protein uL10 (172 aa).

This sequence belongs to the universal ribosomal protein uL10 family. Part of the ribosomal stalk of the 50S ribosomal subunit. The N-terminus interacts with L11 and the large rRNA to form the base of the stalk. The C-terminus forms an elongated spine to which L12 dimers bind in a sequential fashion forming a multimeric L10(L12)X complex.

Functionally, forms part of the ribosomal stalk, playing a central role in the interaction of the ribosome with GTP-bound translation factors. The protein is Large ribosomal subunit protein uL10 of Parvibaculum lavamentivorans (strain DS-1 / DSM 13023 / NCIMB 13966).